Reading from the N-terminus, the 168-residue chain is ATP synthase subunit b (168 aa).

Residues 9-29 (LFNLSTFVFTIINLLVLYYIL) traverse the membrane as a helical segment.

It belongs to the ATPase B chain family. F-type ATPases have 2 components, F(1) - the catalytic core - and F(0) - the membrane proton channel. F(1) has five subunits: alpha(3), beta(3), gamma(1), delta(1), epsilon(1). F(0) has three main subunits: a(1), b(2) and c(10-14). The alpha and beta chains form an alternating ring which encloses part of the gamma chain. F(1) is attached to F(0) by a central stalk formed by the gamma and epsilon chains, while a peripheral stalk is formed by the delta and b chains.

It is found in the cell membrane. Functionally, f(1)F(0) ATP synthase produces ATP from ADP in the presence of a proton or sodium gradient. F-type ATPases consist of two structural domains, F(1) containing the extramembraneous catalytic core and F(0) containing the membrane proton channel, linked together by a central stalk and a peripheral stalk. During catalysis, ATP synthesis in the catalytic domain of F(1) is coupled via a rotary mechanism of the central stalk subunits to proton translocation. Its function is as follows. Component of the F(0) channel, it forms part of the peripheral stalk, linking F(1) to F(0). The sequence is that of ATP synthase subunit b from Caldanaerobacter subterraneus subsp. tengcongensis (strain DSM 15242 / JCM 11007 / NBRC 100824 / MB4) (Thermoanaerobacter tengcongensis).